Consider the following 258-residue polypeptide: Imidazole glycerol phosphate synthase subunit HisF (258 aa).

Active-site residues include D12 and D131.

This sequence belongs to the HisA/HisF family. Heterodimer of HisH and HisF.

The protein resides in the cytoplasm. The catalysed reaction is 5-[(5-phospho-1-deoxy-D-ribulos-1-ylimino)methylamino]-1-(5-phospho-beta-D-ribosyl)imidazole-4-carboxamide + L-glutamine = D-erythro-1-(imidazol-4-yl)glycerol 3-phosphate + 5-amino-1-(5-phospho-beta-D-ribosyl)imidazole-4-carboxamide + L-glutamate + H(+). The protein operates within amino-acid biosynthesis; L-histidine biosynthesis; L-histidine from 5-phospho-alpha-D-ribose 1-diphosphate: step 5/9. IGPS catalyzes the conversion of PRFAR and glutamine to IGP, AICAR and glutamate. The HisF subunit catalyzes the cyclization activity that produces IGP and AICAR from PRFAR using the ammonia provided by the HisH subunit. The sequence is that of Imidazole glycerol phosphate synthase subunit HisF from Nitrosomonas eutropha (strain DSM 101675 / C91 / Nm57).